A 126-amino-acid polypeptide reads, in one-letter code: Histone H2B type 2-B (126 aa).

Low complexity predominate over residues 1 to 12 (MPDPAKSAPAPK). Residues 1–36 (MPDPAKSAPAPKKGSKKAVTKVQKKDGKKRKRSRKE) form a disordered region. At Pro-2 the chain carries N-acetylproline. Lys-6 carries the post-translational modification N6-(2-hydroxyisobutyryl)lysine; alternate. Lys-6 carries the N6-(beta-hydroxybutyryl)lysine; alternate modification. At Lys-6 the chain carries N6-acetyllysine; alternate. At Lys-6 the chain carries N6-butyryllysine; alternate. Lys-6 carries the N6-crotonyllysine; alternate modification. At Lys-6 the chain carries N6-lactoyllysine; alternate. Lys-6 participates in a covalent cross-link: Glycyl lysine isopeptide (Lys-Gly) (interchain with G-Cter in SUMO2); alternate. Residue Ser-7 is modified to ADP-ribosylserine. An N6-(beta-hydroxybutyryl)lysine; alternate modification is found at Lys-12. N6-acetyllysine; alternate occurs at positions 12 and 13. N6-crotonyllysine; alternate occurs at positions 12 and 13. The residue at position 12 (Lys-12) is an N6-lactoyllysine; alternate. Residue Lys-13 is modified to N6-(2-hydroxyisobutyryl)lysine; alternate. Ser-15 bears the Phosphoserine; by STK4/MST1 mark. An N6-acetyllysine; alternate mark is found at Lys-16, Lys-17, Lys-21, and Lys-24. Lys-16, Lys-17, Lys-21, and Lys-24 each carry N6-crotonyllysine; alternate. Residues Lys-16, Lys-17, Lys-21, and Lys-24 each carry the N6-lactoyllysine; alternate modification. Lys-17 is modified (N6-glutaryllysine; alternate). Residues Lys-21 and Lys-24 each carry the N6-(2-hydroxyisobutyryl)lysine; alternate modification. At Lys-21 the chain carries N6-(beta-hydroxybutyryl)lysine; alternate. Position 21 is an N6-butyryllysine; alternate (Lys-21). A Glycyl lysine isopeptide (Lys-Gly) (interchain with G-Cter in SUMO2); alternate cross-link involves residue Lys-21. Lys-25 is modified (N6-(2-hydroxyisobutyryl)lysine). Lys-35 is modified (N6-(2-hydroxyisobutyryl)lysine; alternate). At Lys-35 the chain carries N6-(beta-hydroxybutyryl)lysine; alternate. N6-crotonyllysine; alternate is present on Lys-35. An N6-glutaryllysine; alternate modification is found at Lys-35. Residue Lys-35 is modified to N6-succinyllysine; alternate. Lys-35 participates in a covalent cross-link: Glycyl lysine isopeptide (Lys-Gly) (interchain with G-Cter in ubiquitin); alternate. Glu-36 carries the post-translational modification PolyADP-ribosyl glutamic acid. Position 37 is a phosphoserine; by AMPK (Ser-37). An N6-(2-hydroxyisobutyryl)lysine; alternate mark is found at Lys-44, Lys-47, and Lys-58. Lys-44 carries the post-translational modification N6-lactoyllysine; alternate. 2 positions are modified to N6-glutaryllysine; alternate: Lys-44 and Lys-47. An N6-methyllysine; alternate modification is found at Lys-47. Lys-58 is modified (N6,N6-dimethyllysine; alternate). The residue at position 80 (Arg-80) is a Dimethylated arginine. An N6-(2-hydroxyisobutyryl)lysine; alternate modification is found at Lys-86. Lys-86 bears the N6-acetyllysine; alternate mark. Lys-86 carries the post-translational modification N6-lactoyllysine; alternate. Position 86 is an N6,N6,N6-trimethyllysine; alternate (Lys-86). Arg-87 and Arg-93 each carry omega-N-methylarginine. Lys-109 carries the post-translational modification N6-(2-hydroxyisobutyryl)lysine; alternate. The residue at position 109 (Lys-109) is an N6-(beta-hydroxybutyryl)lysine; alternate. Lys-109 carries the N6-lactoyllysine; alternate modification. N6-glutaryllysine; alternate is present on Lys-109. The residue at position 109 (Lys-109) is an N6-methyllysine; alternate. O-linked (GlcNAc) serine glycosylation is present at Ser-113. Thr-116 carries the phosphothreonine modification. An N6-(2-hydroxyisobutyryl)lysine; alternate mark is found at Lys-117 and Lys-121. N6-(beta-hydroxybutyryl)lysine; alternate is present on Lys-117. Residues Lys-117 and Lys-121 each carry the N6-lactoyllysine; alternate modification. 2 positions are modified to N6-glutaryllysine; alternate: Lys-117 and Lys-121. Residues Lys-117 and Lys-121 each carry the N6-succinyllysine; alternate modification. Lys-117 is subject to N6-methylated lysine; alternate. Lys-121 is covalently cross-linked (Glycyl lysine isopeptide (Lys-Gly) (interchain with G-Cter in ubiquitin); alternate).

Belongs to the histone H2B family. The nucleosome is a histone octamer containing two molecules each of H2A, H2B, H3 and H4 assembled in one H3-H4 heterotetramer and two H2A-H2B heterodimers. The octamer wraps approximately 147 bp of DNA. In terms of processing, monoubiquitination at Lys-35 (H2BK34Ub) by the MSL1/MSL2 dimer is required for histone H3 'Lys-4' (H3K4me) and 'Lys-79' (H3K79me) methylation and transcription activation at specific gene loci, such as HOXA9 and MEIS1 loci. Similarly, monoubiquitination at Lys-121 (H2BK120Ub) by the RNF20/40 complex gives a specific tag for epigenetic transcriptional activation and is also prerequisite for histone H3 'Lys-4' and 'Lys-79' methylation. It also functions cooperatively with the FACT dimer to stimulate elongation by RNA polymerase II. H2BK120Ub also acts as a regulator of mRNA splicing: deubiquitination by USP49 is required for efficient cotranscriptional splicing of a large set of exons. Post-translationally, phosphorylated on Ser-15 (H2BS14ph) by STK4/MST1 during apoptosis; which facilitates apoptotic chromatin condensation. Also phosphorylated on Ser-15 in response to DNA double strand breaks (DSBs), and in correlation with somatic hypermutation and immunoglobulin class-switch recombination. Phosphorylation at Ser-37 (H2BS36ph) by AMPK in response to stress promotes transcription. GlcNAcylation at Ser-113 promotes monoubiquitination of Lys-121. It fluctuates in response to extracellular glucose, and associates with transcribed genes. In terms of processing, ADP-ribosylated by PARP1 or PARP2 on Ser-7 (H2BS6ADPr) in response to DNA damage. H2BS6ADPr promotes recruitment of CHD1L. Poly ADP-ribosylation on Glu-36 (H2BE35ADPr) by PARP1 regulates adipogenesis: it inhibits phosphorylation at Ser-37 (H2BS36ph), thereby blocking expression of pro-adipogenetic genes. Post-translationally, crotonylation (Kcr) is specifically present in male germ cells and marks testis-specific genes in post-meiotic cells, including X-linked genes that escape sex chromosome inactivation in haploid cells. Crotonylation marks active promoters and enhancers and confers resistance to transcriptional repressors. It is also associated with post-meiotically activated genes on autosomes. Hydroxybutyrylation of histones is induced by starvation. In terms of processing, lactylated in macrophages by EP300/P300 by using lactoyl-CoA directly derived from endogenous or exogenous lactate, leading to stimulates gene transcription.

The protein localises to the nucleus. It is found in the chromosome. In terms of biological role, core component of nucleosome. Nucleosomes wrap and compact DNA into chromatin, limiting DNA accessibility to the cellular machineries which require DNA as a template. Histones thereby play a central role in transcription regulation, DNA repair, DNA replication and chromosomal stability. DNA accessibility is regulated via a complex set of post-translational modifications of histones, also called histone code, and nucleosome remodeling. The polypeptide is Histone H2B type 2-B (Mus musculus (Mouse)).